A 333-amino-acid chain; its full sequence is MSWIKEGELSLWERFCANIIKAGPVPKHIAFIMDGNRRYAKKCQVERQEGHTQGFNKLAETLRWCLNLGILEVTVYAFSIENFKRSKSEVDGLLDLARQKFSCLMEEQEKLQKHGVCIRVLGDLHLLPLDLQEKIAHAIQATKNYNKCFLNVCFAYTSRHEIANAVREMAWGVEQGLLEPSDVSESLLDKCLYSNHSPHPDILIRTSGEVRLSDFLLWQTSHSCLVFQPVLWPEYTFWNLCEAILQFQRNHGALQKARDMYAEERKRRQLERDQAAVTEQLLREGLQASGDAQLRRTRLHKLSTKREERVQGFLKALELKRANWLALWGTASA.

Positions 34, 35, 37, 38, and 85 each coordinate (2E,6E)-farnesyl diphosphate. Residue Asp-34 coordinates Mg(2+). Isopentenyl diphosphate is bound by residues Arg-38, Arg-85, Arg-205, Arg-211, and Ser-213.

It belongs to the UPP synthase family. As to quaternary structure, the active dehydrodolichyl diphosphate synthase complex is a heterotetramer composed of a dimer of heterodimer of DHDDS and NUS1. Interacts with NPC2. Mg(2+) is required as a cofactor.

The protein localises to the endoplasmic reticulum membrane. It catalyses the reaction n isopentenyl diphosphate + (2E,6E)-farnesyl diphosphate = a di-trans,poly-cis-polyprenyl diphosphate + n diphosphate. It functions in the pathway protein modification; protein glycosylation. It participates in lipid metabolism. In terms of biological role, with NUS1, forms the dehydrodolichyl diphosphate synthase (DDS) complex, an essential component of the dolichol monophosphate (Dol-P) biosynthetic machinery. Both subunits contribute to enzymatic activity, i.e. condensation of multiple copies of isopentenyl pyrophosphate (IPP) to farnesyl pyrophosphate (FPP) to produce dehydrodolichyl diphosphate (Dedol-PP), a precursor of dolichol phosphate which is utilized as a sugar carrier in protein glycosylation in the endoplasmic reticulum (ER). Synthesizes long-chain polyprenols, mostly of C95 and C100 chain length. Regulates the glycosylation and stability of nascent NPC2, thereby promoting trafficking of LDL-derived cholesterol. The protein is Dehydrodolichyl diphosphate synthase complex subunit Dhdds of Mus musculus (Mouse).